The following is a 90-amino-acid chain: Probable Fe(2+)-trafficking protein (90 aa).

Belongs to the Fe(2+)-trafficking protein family.

Could be a mediator in iron transactions between iron acquisition and iron-requiring processes, such as synthesis and/or repair of Fe-S clusters in biosynthetic enzymes. The chain is Probable Fe(2+)-trafficking protein from Paraburkholderia xenovorans (strain LB400).